The primary structure comprises 948 residues: Isoleucine--tRNA ligase (948 aa).

Residues 58–68 (PYANGDIHIGH) carry the 'HIGH' region motif. E566 serves as a coordination point for L-isoleucyl-5'-AMP. Residues 607–611 (KMSKS) carry the 'KMSKS' region motif. K610 is a binding site for ATP. Zn(2+) contacts are provided by C911, C914, C931, and C934.

Belongs to the class-I aminoacyl-tRNA synthetase family. IleS type 1 subfamily. In terms of assembly, monomer. Requires Zn(2+) as cofactor.

The protein resides in the cytoplasm. The catalysed reaction is tRNA(Ile) + L-isoleucine + ATP = L-isoleucyl-tRNA(Ile) + AMP + diphosphate. Functionally, catalyzes the attachment of isoleucine to tRNA(Ile). As IleRS can inadvertently accommodate and process structurally similar amino acids such as valine, to avoid such errors it has two additional distinct tRNA(Ile)-dependent editing activities. One activity is designated as 'pretransfer' editing and involves the hydrolysis of activated Val-AMP. The other activity is designated 'posttransfer' editing and involves deacylation of mischarged Val-tRNA(Ile). The chain is Isoleucine--tRNA ligase from Vibrio vulnificus (strain YJ016).